A 73-amino-acid chain; its full sequence is Small ribosomal subunit protein bS18 (73 aa).

It belongs to the bacterial ribosomal protein bS18 family. Part of the 30S ribosomal subunit. Forms a tight heterodimer with protein bS6.

In terms of biological role, binds as a heterodimer with protein bS6 to the central domain of the 16S rRNA, where it helps stabilize the platform of the 30S subunit. In Synechococcus sp. (strain WH7803), this protein is Small ribosomal subunit protein bS18.